Consider the following 341-residue polypeptide: MASEAPPFWWDEPDWRALALAPAAWIYGRVSGRRLIRAVPPRVSLPVLCVGNFTVGGAGKTPTAIAFARGAIARGMKPGIVSRGYGGNYSGLHLVDPGHDGARHVGDEPLLLARHAAVALSPDRVKAAEYLKSLGCDFIIMDDGFQSARLHADFSLLVVDASRGIGNGRVIPAGPLRAPLTDQMRKTDALLCIGKGNGADFVIRQAARAGRPIYHAQLRSSSSATVAGRRWLAFAGIGNPDKFYESVRQAGGEVVETHSFADHYSFEPDDIRGLVDMARRQGLGLITTAKDHVRLATMPGVPPEFLSKLAVLDVDLEFDRTDALDHILDTVVERFKSRLHG.

ATP is bound at residue 54–61 (TVGGAGKT).

The protein belongs to the LpxK family.

The catalysed reaction is a lipid A disaccharide + ATP = a lipid IVA + ADP + H(+). Its pathway is glycolipid biosynthesis; lipid IV(A) biosynthesis; lipid IV(A) from (3R)-3-hydroxytetradecanoyl-[acyl-carrier-protein] and UDP-N-acetyl-alpha-D-glucosamine: step 6/6. Functionally, transfers the gamma-phosphate of ATP to the 4'-position of a tetraacyldisaccharide 1-phosphate intermediate (termed DS-1-P) to form tetraacyldisaccharide 1,4'-bis-phosphate (lipid IVA). This chain is Tetraacyldisaccharide 4'-kinase, found in Brucella suis (strain ATCC 23445 / NCTC 10510).